Here is a 575-residue protein sequence, read N- to C-terminus: V-type ATP synthase alpha chain (575 aa).

238–245 is an ATP binding site; the sequence is GPFGAGKT.

The protein belongs to the ATPase alpha/beta chains family.

The catalysed reaction is ATP + H2O + 4 H(+)(in) = ADP + phosphate + 5 H(+)(out). Its function is as follows. Produces ATP from ADP in the presence of a proton gradient across the membrane. The V-type alpha chain is a catalytic subunit. In Borreliella afzelii (strain PKo) (Borrelia afzelii), this protein is V-type ATP synthase alpha chain.